A 212-amino-acid chain; its full sequence is Thymidylate kinase (212 aa).

10 to 17 lines the ATP pocket; it reads GIDGCGKT.

It belongs to the thymidylate kinase family.

It catalyses the reaction dTMP + ATP = dTDP + ADP. Functionally, phosphorylation of dTMP to form dTDP in both de novo and salvage pathways of dTTP synthesis. The chain is Thymidylate kinase from Prochlorococcus marinus (strain MIT 9301).